The sequence spans 252 residues: AA9 family lytic polysaccharide monooxygenase B (252 aa).

Positions 1–20 are cleaved as a signal peptide; sequence MVSFTKTFFAIVACALGVQA. Cu(2+) is bound by residues His21 and His106. Cys72 and Cys198 are disulfide-bonded. Asn158 is a glycosylation site (N-linked (GlcNAc...) asparagine). Positions 184 and 193 each coordinate O2. Tyr195 lines the Cu(2+) pocket. N-linked (GlcNAc...) asparagine glycosylation is present at Asn237.

It belongs to the polysaccharide monooxygenase AA9 family. Cu(2+) serves as cofactor.

It localises to the secreted. The enzyme catalyses [(1-&gt;4)-beta-D-glucosyl]n+m + reduced acceptor + O2 = 4-dehydro-beta-D-glucosyl-[(1-&gt;4)-beta-D-glucosyl]n-1 + [(1-&gt;4)-beta-D-glucosyl]m + acceptor + H2O.. Its function is as follows. Lytic polysaccharide monooxygenase (LPMO) that depolymerizes crystalline and amorphous polysaccharides via the oxidation of scissile alpha- or beta-(1-4)-glycosidic bonds, yielding C1 or C4 oxidation products. Catalysis by LPMOs requires the reduction of the active-site copper from Cu(II) to Cu(I) by a reducing agent and H(2)O(2) or O(2) as a cosubstrate. The synergistic activity of LPMO9B with xylanase Xyl10G or cellulase Cel5B shows efficient bioconversion rates of 56 and 174 percent in pretreated kenaf (Hibiscus cannabinus) and oak, respectively. In Gloeophyllum trabeum (strain ATCC 11539 / FP-39264 / Madison 617) (Brown rot fungus), this protein is AA9 family lytic polysaccharide monooxygenase B.